The primary structure comprises 406 residues: Succinylornithine transaminase (406 aa).

N6-(pyridoxal phosphate)lysine is present on Lys252.

Belongs to the class-III pyridoxal-phosphate-dependent aminotransferase family. AstC subfamily. Pyridoxal 5'-phosphate serves as cofactor.

It carries out the reaction N(2)-succinyl-L-ornithine + 2-oxoglutarate = N-succinyl-L-glutamate 5-semialdehyde + L-glutamate. It functions in the pathway amino-acid degradation; L-arginine degradation via AST pathway; L-glutamate and succinate from L-arginine: step 3/5. In terms of biological role, catalyzes the transamination of N(2)-succinylornithine and alpha-ketoglutarate into N(2)-succinylglutamate semialdehyde and glutamate. Can also act as an acetylornithine aminotransferase. This chain is Succinylornithine transaminase, found in Escherichia coli O17:K52:H18 (strain UMN026 / ExPEC).